The following is a 1091-amino-acid chain: Exonuclease/helicase subunit RexB (1091 aa).

The protein belongs to the helicase family. AddB/RexB type 2 subfamily. As to quaternary structure, heterodimer of RexA (AddA) and RexB. Mg(2+) serves as cofactor.

Involved in DNA double-strand break repair. Is not involved in recombination during natural competence or in plasmid establishment. Its function is as follows. The heterodimer acts as both an ATP-dependent DNA helicase and an ATP-dependent, dual-direction single-stranded exonuclease. Recognizes the chi site generating a DNA molecule suitable for the initiation of homologous recombination. This subunit has 5' -&gt; 3' nuclease activity but not helicase activity. This Streptococcus pneumoniae serotype 4 (strain ATCC BAA-334 / TIGR4) protein is Exonuclease/helicase subunit RexB.